Reading from the N-terminus, the 281-residue chain is Elongation factor 1-delta (281 aa).

N-acetylalanine is present on A2. K17 is modified (N6-acetyllysine). S37, E40, S44, and S60 each carry phosphoserine. A Phosphothreonine modification is found at T73. The tract at residues 80 to 115 (LVVRIASLEVENQSLRGVVQELQQAISKLEARLNVL) is leucine-zipper. A phosphoserine mark is found at S86, N91, L94, and S106. At K107 the chain carries N6-acetyllysine. K117 is modified (N6-acetyllysine; alternate). An N6-succinyllysine; alternate modification is found at K117. Residues 118–172 (SSPGHRATAPQTQHVSPMRQVEPPAKKPATPAEDDEDDDIDLFGSDNEEEDKEAA) are disordered. S119 carries the post-translational modification Phosphoserine. A Phosphothreonine modification is found at T129. Residue S133 is modified to Phosphoserine. T147 carries the post-translational modification Phosphothreonine. Acidic residues predominate over residues 149–169 (AEDDEDDDIDLFGSDNEEEDK). S162 carries the post-translational modification Phosphoserine; by CK2. The segment at 173–281 (QLREERLRQY…SVDIAAFNKI (109 aa)) is catalytic (GEF).

Belongs to the EF-1-beta/EF-1-delta family. As to quaternary structure, EF-1 is composed of 4 subunits: alpha, beta, delta isoform 1, and gamma. Isoform 2 interacts with HSF1 and NFE2L2. In terms of tissue distribution, isoform 2 is specifically expressed in brain, cerebellum and testis.

The protein resides in the nucleus. Functionally, EF-1-beta and EF-1-delta stimulate the exchange of GDP bound to EF-1-alpha to GTP, regenerating EF-1-alpha for another round of transfer of aminoacyl-tRNAs to the ribosome. In terms of biological role, regulates induction of heat-shock-responsive genes through association with heat shock transcription factors and direct DNA-binding at heat shock promoter elements (HSE). This is Elongation factor 1-delta (EEF1D) from Homo sapiens (Human).